We begin with the raw amino-acid sequence, 201 residues long: Guanylate kinase (201 aa).

Residues 2-180 form the Guanylate kinase-like domain; it reads SCLFVISAPS…AARDVASIVQ (179 aa). Residue 9-16 participates in ATP binding; the sequence is APSGAGKT.

The protein belongs to the guanylate kinase family.

It localises to the cytoplasm. It catalyses the reaction GMP + ATP = GDP + ADP. Functionally, essential for recycling GMP and indirectly, cGMP. This Nitrosomonas europaea (strain ATCC 19718 / CIP 103999 / KCTC 2705 / NBRC 14298) protein is Guanylate kinase.